A 929-amino-acid chain; its full sequence is SCY1-like protein 2 (929 aa).

Residues 32-327 (FDVGRHIASG…ADQMTKIPFF (296 aa)) enclose the Protein kinase domain. Residues 443 to 479 (DEIKNSVLPMVYRALEAPSIQIQELCLNIIPTFANLI) form an HEAT repeat. Positions 661-701 (ESENKEDGLQNKHKRASLTLEEKQKLAKEQEQAQKLKSQQP) form a coiled coil. Serine 677 carries the post-translational modification Phosphoserine. The segment covering 684–694 (QKLAKEQEQAQ) has biased composition (basic and acidic residues). Disordered stretches follow at residues 684 to 709 (QKLA…VHTP) and 906 to 929 (NFAQ…DLFG). Residues 695–705 (KLKSQQPLKPQ) show a composition bias toward low complexity. The necessary for interaction with AP2 complex and clathrin, interaction with clathrin is necessary for its targeting to the TGN and endosomal membranes stretch occupies residues 699–929 (QQPLKPQVHT…ASNDLKDLFG (231 aa)). The residue at position 708 (threonine 708) is a Phosphothreonine. A compositionally biased stretch (polar residues) spans 912-922 (TTMTNSSSASN).

Belongs to the protein kinase superfamily. As to quaternary structure, interacts with clathrin and AP2B1; the interaction mediates the association with the AP-2 complex. In terms of processing, could autophosphorylate in presence of poly-L-lysine.

It is found in the cytoplasmic vesicle. The protein localises to the clathrin-coated vesicle. It localises to the golgi apparatus. The protein resides in the trans-Golgi network membrane. Its subcellular location is the endosome membrane. Its function is as follows. Component of the AP2-containing clathrin coat that may regulate clathrin-dependent trafficking at plasma membrane, TGN and endosomal system. A possible serine/threonine-protein kinase toward the beta2-subunit of the plasma membrane adapter complex AP2 and other proteins in presence of poly-L-lysine has not been confirmed. By regulating the expression of excitatory receptors at synapses, plays an essential role in neuronal function and signaling and in brain development. This Homo sapiens (Human) protein is SCY1-like protein 2.